A 277-amino-acid polypeptide reads, in one-letter code: MTETFEMSPYQPVIDPLVIGERQFTSRLMLGTGKYKNLDEAKKSITASGCQILTVAVRRAQNSTIQSMGNLITGLDWSKIWLMPNTAGCQTAQEAIRVAFLGREITKNIGFENNNFTKLEVIPDPKYLLPDGLGTLLAAEYLVSKNFTVLPYINADPILAKQLENAGCATVMPLGSPIGSGQGLKNLSNIQIIIENANVPVIVDAGIGTPSQAAQAMEIGAGGVLANTAVAKAQNAPQMAYAMQLGVLAGRAAFQAGKIDAGKLAQPSSPIVGLSKK.

K118 acts as the Schiff-base intermediate with DXP in catalysis. 1-deoxy-D-xylulose 5-phosphate-binding positions include G179, 205–206, and 227–228; these read AG and NT.

Belongs to the ThiG family. Homotetramer. Forms heterodimers with either ThiH or ThiS.

It is found in the plastid. The protein localises to the chloroplast. It catalyses the reaction [ThiS sulfur-carrier protein]-C-terminal-Gly-aminoethanethioate + 2-iminoacetate + 1-deoxy-D-xylulose 5-phosphate = [ThiS sulfur-carrier protein]-C-terminal Gly-Gly + 2-[(2R,5Z)-2-carboxy-4-methylthiazol-5(2H)-ylidene]ethyl phosphate + 2 H2O + H(+). It functions in the pathway cofactor biosynthesis; thiamine diphosphate biosynthesis. Catalyzes the rearrangement of 1-deoxy-D-xylulose 5-phosphate (DXP) to produce the thiazole phosphate moiety of thiamine. Sulfur is provided by the thiocarboxylate moiety of the carrier protein ThiS. In vitro, sulfur can be provided by H(2)S. The sequence is that of Thiazole synthase from Emiliania huxleyi (Coccolithophore).